Here is a 702-residue protein sequence, read N- to C-terminus: Dynein intermediate chain 2, ciliary (702 aa).

Residues 1–11 show a composition bias toward low complexity; it reads MPVKSTKTKGG. Disordered regions lie at residues 1-64, 128-226, and 243-272; these read MPVK…IKPD, DEAR…FSST, and QEKA…ETQS. 2 stretches are compositionally biased toward basic and acidic residues: residues 36-52 and 152-176; these read GKKD…HGGE and GEEK…RDEE. Residues 189–206 show a composition bias toward polar residues; the sequence is KLTNQFNFSERASQTYNN. Residues 243–261 are compositionally biased toward basic and acidic residues; sequence QEKAKEKKAAPSKKDDDKS. 6 WD repeats span residues 380–420, 429–472, 490–533, 537–577, 580–620, and 628–667; these read PTDS…ANPV, KHTD…LTYT, TQLT…QFLD, AHHM…GPMF, DLGS…YEPI, and KKKT…RKVP.

The protein belongs to the dynein intermediate chain family. Consists of at least two heavy chains (alpha and beta), three intermediate chains and several light chains.

The protein resides in the cytoplasm. Its subcellular location is the cytoskeleton. It localises to the cilium axoneme. Its function is as follows. Microtubule-binding protein that may be involved in dynein outer arm assembly on the axoneme. This is Dynein intermediate chain 2, ciliary from Heliocidaris crassispina (Sea urchin).